Reading from the N-terminus, the 281-residue chain is uncharacterized protein (281 aa).

The helical transmembrane segment at 5 to 27 (AYVTVIYGNNIYLTGALVLGYTL) threads the bilayer.

The protein localises to the membrane. This is an uncharacterized protein from Acanthamoeba polyphaga mimivirus (APMV).